The sequence spans 270 residues: Aliphatic sulfonates import ATP-binding protein SsuB 3 (270 aa).

An ABC transporter domain is found at 17 to 238; the sequence is LAVQNLKKAF…ARGSHRLAAL (222 aa). 49 to 56 contributes to the ATP binding site; that stretch reads GRSGCGKS.

It belongs to the ABC transporter superfamily. Aliphatic sulfonates importer (TC 3.A.1.17.2) family. As to quaternary structure, the complex is composed of two ATP-binding proteins (SsuB), two transmembrane proteins (SsuC) and a solute-binding protein (SsuA).

It localises to the cell inner membrane. The catalysed reaction is ATP + H2O + aliphatic sulfonate-[sulfonate-binding protein]Side 1 = ADP + phosphate + aliphatic sulfonateSide 2 + [sulfonate-binding protein]Side 1.. Part of the ABC transporter complex SsuABC involved in aliphatic sulfonates import. Responsible for energy coupling to the transport system. This chain is Aliphatic sulfonates import ATP-binding protein SsuB 3, found in Pseudomonas syringae pv. tomato (strain ATCC BAA-871 / DC3000).